Here is a 98-residue protein sequence, read N- to C-terminus: UPF0235 protein APJL_1398 (98 aa).

It belongs to the UPF0235 family.

The sequence is that of UPF0235 protein APJL_1398 from Actinobacillus pleuropneumoniae serotype 3 (strain JL03).